Consider the following 141-residue polypeptide: Large ribosomal subunit protein uL11 (141 aa).

It belongs to the universal ribosomal protein uL11 family. Part of the ribosomal stalk of the 50S ribosomal subunit. Interacts with L10 and the large rRNA to form the base of the stalk. L10 forms an elongated spine to which L12 dimers bind in a sequential fashion forming a multimeric L10(L12)X complex. In terms of processing, one or more lysine residues are methylated.

Its function is as follows. Forms part of the ribosomal stalk which helps the ribosome interact with GTP-bound translation factors. The chain is Large ribosomal subunit protein uL11 from Streptococcus pyogenes serotype M1.